Here is a 704-residue protein sequence, read N- to C-terminus: Lebercilin (704 aa).

Over residues Met-1–Lys-14 the composition is skewed to basic and acidic residues. Residues Met-1–Lys-80 form a disordered region. Position 7 is a phosphoserine (Ser-7). The span at Ser-25–Pro-40 shows a compositional bias: low complexity. A Phosphoserine modification is found at Ser-48. The segment covering Thr-49 to Val-63 has biased composition (basic and acidic residues). Positions Lys-105–Ile-300 form a coiled coil. Disordered regions lie at residues Gln-389 to Glu-417 and Glu-476 to Glu-661. The span at Gln-404–Glu-417 shows a compositional bias: basic and acidic residues. Positions Ala-448 to Asp-479 form a coiled coil. Over residues Ser-496 to Thr-505 the composition is skewed to basic and acidic residues. Positions Gly-570 to Ser-591 are enriched in polar residues. The span at Pro-592 to Thr-608 shows a compositional bias: basic and acidic residues. Residues Ser-617 to Ser-627 are compositionally biased toward low complexity.

It belongs to the LCA5 family. Interacts with NINL. Interacts with OFD1. Interacts with FAM161A. Interacts with components of the IFT complex B. Detected in several tissues.

The protein resides in the cytoplasm. It is found in the cytoskeleton. Its subcellular location is the cilium axoneme. The protein localises to the cilium basal body. It localises to the cell projection. The protein resides in the cilium. Functionally, involved in intraflagellar protein (IFT) transport in photoreceptor cilia. The sequence is that of Lebercilin (Lca5) from Mus musculus (Mouse).